The following is a 156-amino-acid chain: Small ribosomal subunit protein uS7 (156 aa).

It belongs to the universal ribosomal protein uS7 family. Part of the 30S ribosomal subunit. Contacts proteins S9 and S11.

In terms of biological role, one of the primary rRNA binding proteins, it binds directly to 16S rRNA where it nucleates assembly of the head domain of the 30S subunit. Is located at the subunit interface close to the decoding center, probably blocks exit of the E-site tRNA. This is Small ribosomal subunit protein uS7 from Pseudomonas fluorescens (strain ATCC BAA-477 / NRRL B-23932 / Pf-5).